Here is a 196-residue protein sequence, read N- to C-terminus: Orotate phosphoribosyltransferase (196 aa).

117–125 (EDIVTTGLS) provides a ligand contact to 5-phospho-alpha-D-ribose 1-diphosphate. Orotate is bound by residues Thr121 and Arg149.

Belongs to the purine/pyrimidine phosphoribosyltransferase family. PyrE subfamily. Homodimer. It depends on Mg(2+) as a cofactor.

It carries out the reaction orotidine 5'-phosphate + diphosphate = orotate + 5-phospho-alpha-D-ribose 1-diphosphate. Its pathway is pyrimidine metabolism; UMP biosynthesis via de novo pathway; UMP from orotate: step 1/2. In terms of biological role, catalyzes the transfer of a ribosyl phosphate group from 5-phosphoribose 1-diphosphate to orotate, leading to the formation of orotidine monophosphate (OMP). The sequence is that of Orotate phosphoribosyltransferase from Methylobacterium sp. (strain 4-46).